Reading from the N-terminus, the 512-residue chain is Allene oxide synthase 1, chloroplastic (512 aa).

Residues 1–25 (MATAAACISFASPSPARVVIRRQTR) constitute a chloroplast transit peptide. Positions 23 to 43 (QTRASASASATDRQEVVSPKR) are disordered. 3 residues coordinate heme b: K127, H158, and K162. N315 lines the (13S)-hydroperoxy-(9Z,11E,15Z)-octadecatrienoate pocket. Heme b is bound by residues K463 and C465.

It belongs to the cytochrome P450 family. It depends on heme b as a cofactor. As to expression, expressed in coleoptiles, and at lower level in leaves of dark-grown seedlings.

Its subcellular location is the plastid. The protein resides in the chloroplast membrane. The catalysed reaction is (13S)-hydroperoxy-(9Z,11E,15Z)-octadecatrienoate = (9Z,13S,15Z)-12,13-epoxyoctadeca-9,11,15-trienoate + H2O. Its pathway is lipid metabolism; oxylipin biosynthesis. Its function is as follows. Involved in the biosynthesis of jasmonic acid, a growth regulator that is implicated also as a signaling molecule in plant defense. Converts 13-hydroperoxylinolenic acid to 12,13-epoxylinolenic acid. The chain is Allene oxide synthase 1, chloroplastic (CYP74A1) from Oryza sativa subsp. japonica (Rice).